The chain runs to 240 residues: tRNA (guanine-N(1)-)-methyltransferase (240 aa).

Residues G108 and 127 to 132 (LGDFIL) each bind S-adenosyl-L-methionine.

This sequence belongs to the RNA methyltransferase TrmD family. In terms of assembly, homodimer.

The protein localises to the cytoplasm. The catalysed reaction is guanosine(37) in tRNA + S-adenosyl-L-methionine = N(1)-methylguanosine(37) in tRNA + S-adenosyl-L-homocysteine + H(+). In terms of biological role, specifically methylates guanosine-37 in various tRNAs. This chain is tRNA (guanine-N(1)-)-methyltransferase, found in Streptococcus mutans serotype c (strain ATCC 700610 / UA159).